Consider the following 131-residue polypeptide: MSMHDPISDMLTRIRNAQRVTKASVAMPSSKLKVAIAAVLKDEGYIEDFAVTGEEKKPVLDIQLKYYAGRPVIERIERVSRPGLRIYKGSNDIPRVMNGLGVAIVSTSKGVMTDRKARAAGIGGELLCIVA.

Belongs to the universal ribosomal protein uS8 family. Part of the 30S ribosomal subunit. Contacts proteins S5 and S12.

In terms of biological role, one of the primary rRNA binding proteins, it binds directly to 16S rRNA central domain where it helps coordinate assembly of the platform of the 30S subunit. This Laribacter hongkongensis (strain HLHK9) protein is Small ribosomal subunit protein uS8.